Here is a 75-residue protein sequence, read N- to C-terminus: Small integral membrane protein 7-A (75 aa).

The signal sequence occupies residues 1–17 (MIGDLLLFGTLLVNAGA). Over 18-53 (VLNFKLKKKESQGFGDDLTEATTGDNIREFLLSLRY) the chain is Extracellular. A helical transmembrane segment spans residues 54-74 (FRIFIALWNIFMMFCMIVLFG). Ser75 is a topological domain (cytoplasmic).

This sequence belongs to the SMIM7 family.

The protein resides in the membrane. The chain is Small integral membrane protein 7-A (smim7-a) from Xenopus laevis (African clawed frog).